We begin with the raw amino-acid sequence, 57 residues long: Stress response protein (57 aa).

Positions 6-10 (RKERR) match the Nuclear localization signal motif.

Mesophyll protoplasts.

The protein localises to the nucleus. In terms of biological role, stress response. May play a role in the reentering of protoplasts into the cell cycle. This Nicotiana sylvestris (Wood tobacco) protein is Stress response protein.